We begin with the raw amino-acid sequence, 406 residues long: 4-hydroxy-3-methylbut-2-en-1-yl diphosphate synthase (ferredoxin) (406 aa).

Cysteine 315, cysteine 318, cysteine 349, and glutamate 356 together coordinate [4Fe-4S] cluster.

Belongs to the IspG family. [4Fe-4S] cluster serves as cofactor.

It carries out the reaction (2E)-4-hydroxy-3-methylbut-2-enyl diphosphate + 2 oxidized [2Fe-2S]-[ferredoxin] + H2O = 2-C-methyl-D-erythritol 2,4-cyclic diphosphate + 2 reduced [2Fe-2S]-[ferredoxin] + H(+). Its pathway is isoprenoid biosynthesis; isopentenyl diphosphate biosynthesis via DXP pathway; isopentenyl diphosphate from 1-deoxy-D-xylulose 5-phosphate: step 5/6. Converts 2C-methyl-D-erythritol 2,4-cyclodiphosphate (ME-2,4cPP) into 1-hydroxy-2-methyl-2-(E)-butenyl 4-diphosphate. This is 4-hydroxy-3-methylbut-2-en-1-yl diphosphate synthase (ferredoxin) from Microcystis aeruginosa (strain NIES-843 / IAM M-2473).